Consider the following 268-residue polypeptide: 4-hydroxy-tetrahydrodipicolinate reductase (268 aa).

Residues 10–15 (GASGRM) and Asp-36 each bind NAD(+). Arg-37 lines the NADP(+) pocket. Residues 99–101 (GTT) and 123–126 (SANM) each bind NAD(+). His-156 acts as the Proton donor/acceptor in catalysis. His-157 contributes to the (S)-2,3,4,5-tetrahydrodipicolinate binding site. The active-site Proton donor is the Lys-160. (S)-2,3,4,5-tetrahydrodipicolinate is bound at residue 166–167 (GT).

It belongs to the DapB family.

The protein resides in the cytoplasm. The catalysed reaction is (S)-2,3,4,5-tetrahydrodipicolinate + NAD(+) + H2O = (2S,4S)-4-hydroxy-2,3,4,5-tetrahydrodipicolinate + NADH + H(+). It carries out the reaction (S)-2,3,4,5-tetrahydrodipicolinate + NADP(+) + H2O = (2S,4S)-4-hydroxy-2,3,4,5-tetrahydrodipicolinate + NADPH + H(+). The protein operates within amino-acid biosynthesis; L-lysine biosynthesis via DAP pathway; (S)-tetrahydrodipicolinate from L-aspartate: step 4/4. In terms of biological role, catalyzes the conversion of 4-hydroxy-tetrahydrodipicolinate (HTPA) to tetrahydrodipicolinate. The sequence is that of 4-hydroxy-tetrahydrodipicolinate reductase from Burkholderia pseudomallei (strain 1710b).